A 717-amino-acid chain; its full sequence is F-box only protein 42 (717 aa).

Acidic residues predominate over residues 1–30 (MASSSDSEDDSFMAVDQEETVLEGTMEQDE). The tract at residues 1 to 47 (MASSSDSEDDSFMAVDQEETVLEGTMEQDEEPHPVLEAEETRHNRSM) is disordered. Basic and acidic residues predominate over residues 31–43 (EPHPVLEAEETRH). In terms of domain architecture, F-box spans 44-93 (NRSMSELPEEVLEYILSFLSPYQEHKTAALVCKQWYRLIKGVAHQCYHGF). 4 Kelch repeats span residues 132-184 (SMYV…VYKD), 186-242 (LVLF…VIDD), 244-293 (MIVF…VIDD), and 295-342 (TILI…LWCH). Disordered stretches follow at residues 361 to 472 (RAPL…SAAE) and 508 to 539 (PASS…GVHT). Low complexity predominate over residues 363–376 (PLSPSLNSRPSPIS). Phosphoserine occurs at positions 365 and 373. Phosphothreonine is present on Thr378. Polar residues-rich tracts occupy residues 416–426 (QRQTPSGSREG) and 455–469 (SLDS…STPS). Ser552 is subject to Phosphoserine. Low complexity predominate over residues 570 to 596 (GPSASAALSPPLGSSPGSPGSQSLSSG). Residues 570-635 (GPSASAALSP…PQSLNVGKPL (66 aa)) form a disordered region.

Component of some SCF complex, composed of CUL1, SKP1, RBX1 and FBXO42. Interacts (via the kelch domain) with p53/TP53; interaction is direct.

In terms of biological role, substrate-recognition component of some SCF (SKP1-CUL1-F-box protein)-type E3 ubiquitin ligase complex. Specifically recognizes p53/TP53, promoting its ubiquitination and degradation. In Pongo abelii (Sumatran orangutan), this protein is F-box only protein 42 (FBXO42).